Consider the following 880-residue polypeptide: Leucine--tRNA ligase (880 aa).

Residues 49–59 carry the 'HIGH' region motif; that stretch reads PYPSGRIHMGH. The 'KMSKS' region signature appears at 638–642; sequence KMSKS. An ATP-binding site is contributed by K641.

This sequence belongs to the class-I aminoacyl-tRNA synthetase family.

It is found in the cytoplasm. It carries out the reaction tRNA(Leu) + L-leucine + ATP = L-leucyl-tRNA(Leu) + AMP + diphosphate. This chain is Leucine--tRNA ligase, found in Bartonella quintana (strain Toulouse) (Rochalimaea quintana).